Reading from the N-terminus, the 310-residue chain is Methionyl-tRNA formyltransferase (310 aa).

Residue 111-114 (SLLP) participates in (6S)-5,6,7,8-tetrahydrofolate binding.

Belongs to the Fmt family.

It carries out the reaction L-methionyl-tRNA(fMet) + (6R)-10-formyltetrahydrofolate = N-formyl-L-methionyl-tRNA(fMet) + (6S)-5,6,7,8-tetrahydrofolate + H(+). Attaches a formyl group to the free amino group of methionyl-tRNA(fMet). The formyl group appears to play a dual role in the initiator identity of N-formylmethionyl-tRNA by promoting its recognition by IF2 and preventing the misappropriation of this tRNA by the elongation apparatus. This is Methionyl-tRNA formyltransferase from Nitrobacter hamburgensis (strain DSM 10229 / NCIMB 13809 / X14).